A 326-amino-acid polypeptide reads, in one-letter code: MLTLARQQQRQNIRWLLCLSVLMLLALLLSLCAGEQWISPGDWFSPRGELFVWQIRLPRTLAVLLVGAALAISGAVMQALFENPLAEPGLLGVSNGAGVGLIAAVLLGQGQLPNWALGLCAIAGALIITLILLRFARRHLSTSRLLLAGVALGIICSALMTWAIYFSTSVDLRQLMYWMMGGFGGVDWRQSWLMLALIPMLLWICCQSRPMNMLALGEISARQLGLPLWFWRNVLVAATGWMVGVSVALAGAIGFIGLVIPHILRLCGLTDHRALLPGCALAGASALLLADIVARLALAAAELPIGVVTATLGAPVFIWLLLKAGR.

Residues Met1–Arg10 lie on the Cytoplasmic side of the membrane. The chain crosses the membrane as a helical span at residues Gln11–Glu35. Residues Gln36 to Arg56 lie on the Periplasmic side of the membrane. Residues Leu57–Phe81 traverse the membrane as a helical segment. Residues Glu82–Gly92 are Cytoplasmic-facing. Residues Val93–Leu107 traverse the membrane as a helical segment. Residues Gly108–Pro113 are Periplasmic-facing. Residues Asn114–Arg138 traverse the membrane as a helical segment. The Cytoplasmic portion of the chain corresponds to His139–Ser141. A helical transmembrane segment spans residues Thr142–Phe166. At Ser167–Gln190 the chain is on the periplasmic side. The helical transmembrane segment at Ser191 to Cys206 threads the bilayer. The Cytoplasmic segment spans residues Gln207–Leu228. The helical transmembrane segment at Trp229 to Leu249 threads the bilayer. Topologically, residues Ala250–Gly257 are periplasmic. A helical transmembrane segment spans residues Leu258–Cys267. Residues Gly268–Ala274 are Cytoplasmic-facing. Residues Leu275 to Leu296 form a helical membrane-spanning segment. Topologically, residues Ala297–Pro304 are periplasmic. A helical membrane pass occupies residues Ile305–Ala324. The Cytoplasmic segment spans residues Gly325–Arg326.

The protein belongs to the binding-protein-dependent transport system permease family. FecCD subfamily. The complex is composed of two ATP-binding proteins (BtuD), two transmembrane proteins (BtuC) and a solute-binding protein (BtuF).

The protein resides in the cell inner membrane. Functionally, part of the ABC transporter complex BtuCDF involved in vitamin B12 import. Involved in the translocation of the substrate across the membrane. The chain is Vitamin B12 import system permease protein BtuC (btuC) from Escherichia coli O157:H7.